Consider the following 306-residue polypeptide: Ribonuclease BN (306 aa).

7 residues coordinate Zn(2+): His-64, His-66, Asp-68, His-69, His-141, Asp-212, and His-270. Catalysis depends on Asp-68, which acts as the Proton acceptor.

It belongs to the RNase Z family. RNase BN subfamily. Homodimer. Zn(2+) serves as cofactor.

Zinc phosphodiesterase, which has both exoribonuclease and endoribonuclease activities. This is Ribonuclease BN from Klebsiella pneumoniae subsp. pneumoniae (strain ATCC 700721 / MGH 78578).